A 541-amino-acid polypeptide reads, in one-letter code: Sorting nexin-27 (541 aa).

Residues 1 to 42 (MADEDGEGIHPSAPHRNGGGGGGGGSGLHCAGNGGGGGGGPR) are disordered. The segment covering 17–41 (NGGGGGGGGSGLHCAGNGGGGGGGP) has biased composition (gly residues). One can recognise a PDZ domain in the interval 43–136 (VVRIVKSESG…ELILTVLSVP (94 aa)). Residues Ser51 and Ser62 each carry the phosphoserine modification. The PX domain occupies 161-269 (QAVPISVPRY…EFLSESDENY (109 aa)). One can recognise a Ras-associating domain in the interval 273–362 (SDVELRVALP…TCLTIRKWLF (90 aa)). The tract at residues 273-362 (SDVELRVALP…TCLTIRKWLF (90 aa)) is FERM-like region F1. Residues 373–421 (NDLAVTYFFHQAVDDVKKGYIKAEEKSYQLQKLYEQRKMVMYLNMLRTC) are FERM-like region F2. An FERM-like region F3 region spans residues 425 to 525 (NEIIFPHCAC…RVFCELKWRK (101 aa)).

Belongs to the sorting nexin family. Core component of the SNX27-retromer, a multiprotein complex composed of SNX27, the WASH complex and the retromer complex. Interacts (via PDZ domain) with a number of target transmembrane proteins (via PDZ-binding motif): ABCC4, ADRB2, ARHGEF7, GRIA1, GRIA2, GRIN1, GRIN2A GRIN2C, KCNJ6, KCNJ9 and SLC2A1/GLUT1. Interacts (via the FERM-like regions) with the WASH complex. Interacts with SNX1. Interacts with CYTIP. Isoform 1 and isoform 2 directly interact with DGKZ. Isoform 1 and isoform 2 interact with HT4R isoform 5-HTA(A). Interacts with MCC. Interacts (via PDZ domains) with SLC9A3; directs SLC9A3 membrane insertion from early endosomes to the plasma membrane. Widely expressed. Expressed in cells of hematopoietic origin (at protein level).

The protein resides in the early endosome membrane. It localises to the cytoplasm. Its subcellular location is the cytosol. Involved in the retrograde transport from endosome to plasma membrane, a trafficking pathway that promotes the recycling of internalized transmembrane proteins. Following internalization, endocytosed transmembrane proteins are delivered to early endosomes and recycled to the plasma membrane instead of being degraded in lysosomes. SNX27 specifically binds and directs sorting of a subset of transmembrane proteins containing a PDZ-binding motif at the C-terminus: following interaction with target transmembrane proteins, associates with the retromer complex, preventing entry into the lysosomal pathway, and promotes retromer-tubule based plasma membrane recycling. SNX27 also binds with the WASH complex. Interacts with membranes containing phosphatidylinositol-3-phosphate (PtdIns(3P)). May participate in establishment of natural killer cell polarity. Recruits CYTIP to early endosomes. The protein is Sorting nexin-27 (SNX27) of Homo sapiens (Human).